Consider the following 162-residue polypeptide: Regulator of ribonuclease activity A (162 aa).

Belongs to the RraA family. As to quaternary structure, homotrimer. Binds to both RNA-binding sites in the C-terminal region of Rne and to RhlB.

Its subcellular location is the cytoplasm. In terms of biological role, globally modulates RNA abundance by binding to RNase E (Rne) and regulating its endonucleolytic activity. Can modulate Rne action in a substrate-dependent manner by altering the composition of the degradosome. Modulates RNA-binding and helicase activities of the degradosome. In Haemophilus influenzae (strain ATCC 51907 / DSM 11121 / KW20 / Rd), this protein is Regulator of ribonuclease activity A.